The sequence spans 263 residues: Lens fiber major intrinsic protein (263 aa).

Topologically, residues 1-9 (MWELRSASF) are cytoplasmic. A helical transmembrane segment spans residues 10 to 29 (WRAIFAEFFATLFYVFFGLG). Residues 30–41 (SSLRWAPGPLHV) lie on the Extracellular side of the membrane. The helical transmembrane segment at 42 to 59 (LQVALAFGLALATLVQTV) threads the bilayer. The Cytoplasmic portion of the chain corresponds to 60–61 (GH). The discontinuously helical intramembrane region spans 62–77 (ISGAHVNPAVTFAFLV). Residues 68 to 70 (NPA) carry the NPA 1 motif. Over 78–82 (GSQMS) the chain is Cytoplasmic. A helical transmembrane segment spans residues 83–106 (LLRAFCYIAAQLLGAVAGAAVLYS). Residues 107 to 127 (VTPPAVRGNLALNTLHAGVSV) lie on the Extracellular side of the membrane. A helical membrane pass occupies residues 128–148 (GQATTVEIFLTLQFVLCIFAT). Residues 149-156 (YDERRNGR) are Cytoplasmic-facing. Residues 157-175 (MGSVALAVGFSLTLGHLFG) form a helical membrane-spanning segment. The Extracellular segment spans residues 176-178 (MYY). Residues 179 to 193 (TGAGMNPARSFAPAI) constitute an intramembrane region (discontinuously helical). The NPA 2 motif lies at 184–186 (NPA). The Extracellular portion of the chain corresponds to 194-200 (LTRNFSN). A helical transmembrane segment spans residues 201–222 (HWVYWVGPIIGGGLGSLLYDFL). The Cytoplasmic portion of the chain corresponds to 223–263 (LFPRLKSVSERLSILKGARPSDSNGQPEGTGEPVELKTQAL). Residues 227-237 (LKSVSERLSIL) form an interaction with CALM region. S235, S243, and S245 each carry phosphoserine. Positions 240–263 (ARPSDSNGQPEGTGEPVELKTQAL) are disordered. The residue at position 246 (N246) is a Deamidated asparagine.

The protein belongs to the MIP/aquaporin (TC 1.A.8) family. Homotetramer; each monomer provides an independent water pore. Two homotetramers on opposing membranes can dimerize, forming a cell-cell junction. Interacts with CALM; the calcium-calmodulin/CALM complex interacts with the cytoplasmic domains of two aquaporins, leading to channel closure. Interacts with BFSP1 (via C-terminus); prevents calcium-dependent inhibition of the water channel activity. Post-translationally, subject to partial proteolytic cleavage in the eye lens core. Partial proteolysis promotes interactions between tetramers from adjoining membranes. Fatty acylated at Met-1 and Lys-238. The acyl modifications, in decreasing order of ion abundance, are: oleoyl (C18:1) &gt; palmitoyl (C16:0) &gt; stearoyl (C18:0) &gt; eicosenoyl (C20:1) &gt; dihomo-gamma-linolenoyl (C20:3) &gt; palmitoleoyl (C16:1) &gt; eicosadienoyl (C20:2).

The protein localises to the cell membrane. It localises to the cell junction. The enzyme catalyses H2O(in) = H2O(out). With respect to regulation, the water channel activity is inhibited by calcium through calmodulin/CALM. In terms of biological role, aquaporins form homotetrameric transmembrane channels, with each monomer independently mediating water transport across the plasma membrane along its osmotic gradient. Specifically expressed in lens fiber cells, this aquaporin is crucial for maintaining lens water homeostasis and transparency. Beyond water permeability, it also acts as a cell-to-cell adhesion molecule, forming thin junctions between lens fiber cells that are essential for maintaining the ordered structure and transparency of the lens. The chain is Lens fiber major intrinsic protein from Rattus norvegicus (Rat).